Reading from the N-terminus, the 417-residue chain is Tyrosine--tRNA ligase (417 aa).

Y35 is a binding site for L-tyrosine. The 'HIGH' region motif lies at A40–H49. Residues Y165 and Q169 each coordinate L-tyrosine. The 'KMSKS' region motif lies at K229–S233. K232 is an ATP binding site. The S4 RNA-binding domain maps to I350 to F416.

This sequence belongs to the class-I aminoacyl-tRNA synthetase family. TyrS type 1 subfamily. In terms of assembly, homodimer.

Its subcellular location is the cytoplasm. It carries out the reaction tRNA(Tyr) + L-tyrosine + ATP = L-tyrosyl-tRNA(Tyr) + AMP + diphosphate + H(+). Its function is as follows. Catalyzes the attachment of tyrosine to tRNA(Tyr) in a two-step reaction: tyrosine is first activated by ATP to form Tyr-AMP and then transferred to the acceptor end of tRNA(Tyr). The protein is Tyrosine--tRNA ligase of Phytoplasma mali (strain AT).